Reading from the N-terminus, the 522-residue chain is Sensory neuron membrane protein 1 (522 aa).

The Cytoplasmic portion of the chain corresponds to 1 to 11 (MKLPKHLKFAA). The chain crosses the membrane as a helical span at residues 12-32 (GAGGAFLFGILFGWVMFPAIL). Over 33-455 (KGQLKKEMAL…KFQLFYPKKA (423 aa)) the chain is Extracellular. 2 N-linked (GlcNAc...) asparagine glycosylation sites follow: asparagine 67 and asparagine 229. Cystine bridges form between cysteine 268/cysteine 333, cysteine 297/cysteine 350, and cysteine 335/cysteine 339. Asparagine 438 is a glycosylation site (N-linked (GlcNAc...) asparagine). The helical transmembrane segment at 456 to 476 (VGVIKWLLVTFGGFGLIGCTI) threads the bilayer. Residues 477–522 (YHYKDRIMSFASSPGSAAVTKVKPEEVEQKDVSVIGQPQEPAKINM) lie on the Cytoplasmic side of the membrane.

It belongs to the CD36 family.

The protein resides in the cell membrane. In terms of biological role, plays an olfactory role that is not restricted to pheromone sensitivity. The sequence is that of Sensory neuron membrane protein 1 from Plutella xylostella (Diamondback moth).